Reading from the N-terminus, the 96-residue chain is Co-chaperonin GroES (96 aa).

It belongs to the GroES chaperonin family. As to quaternary structure, heptamer of 7 subunits arranged in a ring. Interacts with the chaperonin GroEL.

The protein localises to the cytoplasm. Functionally, together with the chaperonin GroEL, plays an essential role in assisting protein folding. The GroEL-GroES system forms a nano-cage that allows encapsulation of the non-native substrate proteins and provides a physical environment optimized to promote and accelerate protein folding. GroES binds to the apical surface of the GroEL ring, thereby capping the opening of the GroEL channel. This Shewanella amazonensis (strain ATCC BAA-1098 / SB2B) protein is Co-chaperonin GroES.